The chain runs to 364 residues: Methylthioribose-1-phosphate isomerase (364 aa).

Asp254 functions as the Proton donor in the catalytic mechanism.

This sequence belongs to the eIF-2B alpha/beta/delta subunits family. MtnA subfamily.

Its subcellular location is the cytoplasm. The protein resides in the nucleus. The catalysed reaction is 5-(methylsulfanyl)-alpha-D-ribose 1-phosphate = 5-(methylsulfanyl)-D-ribulose 1-phosphate. It participates in amino-acid biosynthesis; L-methionine biosynthesis via salvage pathway; L-methionine from S-methyl-5-thio-alpha-D-ribose 1-phosphate: step 1/6. Its function is as follows. Catalyzes the interconversion of methylthioribose-1-phosphate (MTR-1-P) into methylthioribulose-1-phosphate (MTRu-1-P). This chain is Methylthioribose-1-phosphate isomerase, found in Drosophila yakuba (Fruit fly).